Reading from the N-terminus, the 131-residue chain is Sperm microtubule inner protein 11 (131 aa).

Residues 17–44 form a disordered region; the sequence is SKKRDKTEETNQKDPVPTRLPPIFSEDG.

In terms of assembly, microtubule inner protein component of sperm flagellar doublet microtubules. In terms of tissue distribution, expressed in sperm.

The protein localises to the cytoplasm. The protein resides in the cytoskeleton. It is found in the flagellum axoneme. In terms of biological role, microtubule inner protein (MIP) part of the dynein-decorated doublet microtubules (DMTs) in flagellum axoneme. May serve to reinforce and thus stabilize the microtubule structure in the sperm flagella. The chain is Sperm microtubule inner protein 11 (SPMIP11) from Bos taurus (Bovine).